We begin with the raw amino-acid sequence, 404 residues long: Glucose-1-phosphate adenylyltransferase 2 (404 aa).

Residues Tyr97, Gly162, 177-178, and Ser195 contribute to the alpha-D-glucose 1-phosphate site; that span reads EK.

Belongs to the bacterial/plant glucose-1-phosphate adenylyltransferase family. As to quaternary structure, homotetramer.

It carries out the reaction alpha-D-glucose 1-phosphate + ATP + H(+) = ADP-alpha-D-glucose + diphosphate. It participates in glycan biosynthesis; glycogen biosynthesis. Involved in the biosynthesis of ADP-glucose, a building block required for the elongation reactions to produce glycogen. Catalyzes the reaction between ATP and alpha-D-glucose 1-phosphate (G1P) to produce pyrophosphate and ADP-Glc. This Vibrio vulnificus (strain YJ016) protein is Glucose-1-phosphate adenylyltransferase 2.